Reading from the N-terminus, the 494-residue chain is Protein translocase subunit SecD (494 aa).

6 helical membrane passes run 7–27, 322–342, 345–365, 372–392, 420–440, and 441–461; these read WFAL…NLPF, LIAA…FYRL, FIAI…YALI, PGVA…VLIF, IIDG…LGTG, and FVKG…FTAL.

The protein belongs to the SecD/SecF family. SecD subfamily. As to quaternary structure, forms a complex with SecF. Part of the essential Sec protein translocation apparatus which comprises SecA, SecYEG and auxiliary proteins SecDF. Other proteins may also be involved.

The protein localises to the cell inner membrane. Functionally, part of the Sec protein translocase complex. Interacts with the SecYEG preprotein conducting channel. SecDF uses the proton motive force (PMF) to complete protein translocation after the ATP-dependent function of SecA. Probably participates in protein translocation into and across both the cytoplasmic and thylakoid membranes in cyanobacterial cells. This Prochlorococcus marinus (strain SARG / CCMP1375 / SS120) protein is Protein translocase subunit SecD.